The sequence spans 288 residues: Probable chromosome 1-partitioning protein ParB (288 aa).

Belongs to the ParB family.

Its function is as follows. Involved in chromosome partition. Localize to both poles of the predivisional cell following completion of DNA replication. Binds to the DNA origin of replication. The sequence is that of Probable chromosome 1-partitioning protein ParB (parB1) from Deinococcus radiodurans (strain ATCC 13939 / DSM 20539 / JCM 16871 / CCUG 27074 / LMG 4051 / NBRC 15346 / NCIMB 9279 / VKM B-1422 / R1).